The following is a 473-amino-acid chain: Photosystem II CP43 reaction center protein (473 aa).

A propeptide spanning residues 1–14 (MKTLYSLRRYYPVE) is cleaved from the precursor. Threonine 15 carries the N-acetylthreonine modification. Threonine 15 carries the post-translational modification Phosphothreonine. Transmembrane regions (helical) follow at residues 69-93 (LFEV…PHLA), 134-155 (LIGP…KDKN), 178-200 (KASF…REIT), 255-275 (KPFA…LSYS), and 291-312 (WFNN…ASQA). [CaMn4O5] cluster is bound at residue glutamate 367. Residues 447-471 (RARAAAAGFEKGIDRDSEPVLSMTP) traverse the membrane as a helical segment.

Belongs to the PsbB/PsbC family. PsbC subfamily. As to quaternary structure, PSII is composed of 1 copy each of membrane proteins PsbA, PsbB, PsbC, PsbD, PsbE, PsbF, PsbH, PsbI, PsbJ, PsbK, PsbL, PsbM, PsbT, PsbX, PsbY, PsbZ, Psb30/Ycf12, at least 3 peripheral proteins of the oxygen-evolving complex and a large number of cofactors. It forms dimeric complexes. Requires Binds multiple chlorophylls and provides some of the ligands for the Ca-4Mn-5O cluster of the oxygen-evolving complex. It may also provide a ligand for a Cl- that is required for oxygen evolution. PSII binds additional chlorophylls, carotenoids and specific lipids. as cofactor.

It is found in the plastid. The protein resides in the chloroplast thylakoid membrane. Its function is as follows. One of the components of the core complex of photosystem II (PSII). It binds chlorophyll and helps catalyze the primary light-induced photochemical processes of PSII. PSII is a light-driven water:plastoquinone oxidoreductase, using light energy to abstract electrons from H(2)O, generating O(2) and a proton gradient subsequently used for ATP formation. The sequence is that of Photosystem II CP43 reaction center protein from Anthoceros angustus (Hornwort).